We begin with the raw amino-acid sequence, 85 residues long: Protein WIR1B (85 aa).

The Cytoplasmic segment spans residues 1-12 (MASHSAAGRRPT). Residues 13–34 (ALVHIALFVAIAAVIINSSVCL) traverse the membrane as a helical segment. Residues 35–85 (GAAVHDAATSGTGALDPNVPAVPTPGGAGQPYTGRGCRTVYGCKPPAGSQP) lie on the Extracellular side of the membrane.

Its subcellular location is the membrane. Functionally, associated with pathogen defense. The chain is Protein WIR1B (WIR1B) from Triticum aestivum (Wheat).